A 571-amino-acid chain; its full sequence is 15-cis-phytoene desaturase, chloroplastic/chromoplastic (571 aa).

A chloroplast and chromoplast-targeting transit peptide spans 1 to 96 (MDTGCLSSMN…FRNSERPSKP (96 aa)). Residues Ala-107, 126 to 127 (EA), Lys-134, 151 to 152 (HI), and Tyr-157 each bind FAD. Position 292 (Arg-292) interacts with substrate. The FAD site is built by Ile-334 and Asp-523. Ala-531 provides a ligand contact to substrate. Met-533 lines the FAD pocket.

The protein belongs to the carotenoid/retinoid oxidoreductase family. As to quaternary structure, homotetramer. FAD serves as cofactor.

The protein resides in the plastid. It is found in the chloroplast. The protein localises to the chromoplast. It localises to the membrane. The enzyme catalyses 2 a plastoquinone + 15-cis-phytoene = 9,9',15-tri-cis-zeta-carotene + 2 a plastoquinol. It participates in carotenoid biosynthesis; lycopene biosynthesis. In terms of biological role, converts phytoene into zeta-carotene via the intermediary of phytofluene by the symmetrical introduction of two double bonds at the C-11 and C-11' positions of phytoene with a concomitant isomerization of two neighboring double bonds at the C9 and C9' positions from trans to cis. This Zea mays (Maize) protein is 15-cis-phytoene desaturase, chloroplastic/chromoplastic (PDS1).